The chain runs to 201 residues: MALHDENVVWHSHPVTVAAREQLHGHRGVVLWFTGLSGSGKSTVAGALEEALHHRGVSTYLLDGDNVRHGLCRDLGFSDADRQENIRRVGEVASLMADAGLIVLTAFISPHRAERQLVKERVGHDRFIEIYVNTPLAICEQRDPKGLYKKARAGELRNFTGIDAIYEAPDSPQVHLNGEQLVTNLVSQLLDLLRRRDIIRS.

ATP is bound at residue 35-42; sequence GLSGSGKS. Residue Ser-109 is the Phosphoserine intermediate of the active site.

It belongs to the APS kinase family.

It catalyses the reaction adenosine 5'-phosphosulfate + ATP = 3'-phosphoadenylyl sulfate + ADP + H(+). It functions in the pathway sulfur metabolism; hydrogen sulfide biosynthesis; sulfite from sulfate: step 2/3. Its function is as follows. Catalyzes the synthesis of activated sulfate. The protein is Adenylyl-sulfate kinase of Salmonella paratyphi C (strain RKS4594).